We begin with the raw amino-acid sequence, 248 residues long: Peptidyl-tRNA hydrolase (248 aa).

Tyr14 is a tRNA binding site. Residue His19 is the Proton acceptor of the active site. The tRNA site is built by Phe64, Asn66, and Asn112. Residues Pro190 to Lys248 are disordered. The segment covering Ala212–Ala226 has biased composition (low complexity).

Belongs to the PTH family. As to quaternary structure, monomer.

The protein resides in the cytoplasm. It carries out the reaction an N-acyl-L-alpha-aminoacyl-tRNA + H2O = an N-acyl-L-amino acid + a tRNA + H(+). Its function is as follows. Hydrolyzes ribosome-free peptidyl-tRNAs (with 1 or more amino acids incorporated), which drop off the ribosome during protein synthesis, or as a result of ribosome stalling. Catalyzes the release of premature peptidyl moieties from peptidyl-tRNA molecules trapped in stalled 50S ribosomal subunits, and thus maintains levels of free tRNAs and 50S ribosomes. This chain is Peptidyl-tRNA hydrolase, found in Ruegeria sp. (strain TM1040) (Silicibacter sp.).